The primary structure comprises 118 residues: Co-chaperonin GroES (118 aa).

Belongs to the GroES chaperonin family. As to quaternary structure, heptamer of 7 subunits arranged in a ring. Interacts with the chaperonin GroEL.

The protein resides in the cytoplasm. Functionally, together with the chaperonin GroEL, plays an essential role in assisting protein folding. The GroEL-GroES system forms a nano-cage that allows encapsulation of the non-native substrate proteins and provides a physical environment optimized to promote and accelerate protein folding. GroES binds to the apical surface of the GroEL ring, thereby capping the opening of the GroEL channel. The protein is Co-chaperonin GroES of Helicobacter pylori (strain Shi470).